We begin with the raw amino-acid sequence, 424 residues long: CinA-like protein (424 aa).

This sequence belongs to the CinA family.

The polypeptide is CinA-like protein (Shewanella amazonensis (strain ATCC BAA-1098 / SB2B)).